The primary structure comprises 196 residues: ATP-dependent Clp protease proteolytic subunit (196 aa).

Ser-101 functions as the Nucleophile in the catalytic mechanism. Residue His-126 is part of the active site.

Belongs to the peptidase S14 family. As to quaternary structure, component of the chloroplastic Clp protease core complex.

Its subcellular location is the plastid. The protein localises to the chloroplast stroma. The catalysed reaction is Hydrolysis of proteins to small peptides in the presence of ATP and magnesium. alpha-casein is the usual test substrate. In the absence of ATP, only oligopeptides shorter than five residues are hydrolyzed (such as succinyl-Leu-Tyr-|-NHMec, and Leu-Tyr-Leu-|-Tyr-Trp, in which cleavage of the -Tyr-|-Leu- and -Tyr-|-Trp bonds also occurs).. Its function is as follows. Cleaves peptides in various proteins in a process that requires ATP hydrolysis. Has a chymotrypsin-like activity. Plays a major role in the degradation of misfolded proteins. The protein is ATP-dependent Clp protease proteolytic subunit of Populus trichocarpa (Western balsam poplar).